The sequence spans 43 residues: Photosystem II reaction center protein Psb30 (43 aa).

The chain crosses the membrane as a helical span at residues 16-36 (IAQLTMLAMVLIAGPVVIVLL).

It belongs to the Psb30/Ycf12 family. PSII is composed of 1 copy each of membrane proteins PsbA, PsbB, PsbC, PsbD, PsbE, PsbF, PsbH, PsbI, PsbJ, PsbK, PsbL, PsbM, PsbT, PsbX, PsbY, PsbZ, Psb30/Ycf12, peripheral proteins PsbO, CyanoQ (PsbQ), PsbU, PsbV and a large number of cofactors. It forms dimeric complexes.

The protein localises to the cellular thylakoid membrane. A core subunit of photosystem II (PSII), probably helps stabilize the reaction center. This Trichodesmium erythraeum (strain IMS101) protein is Photosystem II reaction center protein Psb30.